Reading from the N-terminus, the 231-residue chain is Small ribosomal subunit protein uS3 (231 aa).

Residues 39-107 (IRKFIKEKLF…QVSVNIVEIK (69 aa)) enclose the KH type-2 domain.

This sequence belongs to the universal ribosomal protein uS3 family. Part of the 30S ribosomal subunit. Forms a tight complex with proteins S10 and S14.

Its function is as follows. Binds the lower part of the 30S subunit head. Binds mRNA in the 70S ribosome, positioning it for translation. The polypeptide is Small ribosomal subunit protein uS3 (Pelotomaculum thermopropionicum (strain DSM 13744 / JCM 10971 / SI)).